A 586-amino-acid chain; its full sequence is Assimilatory ferredoxin-dependent nitrite reductase (586 aa).

Positions 411, 417, 455, and 459 each coordinate [4Fe-4S] cluster. Position 459 (Cys-459) interacts with siroheme. Positions 566 to 586 (SWYPFADEDEPPKTEQPMTSD) are disordered.

It belongs to the nitrite and sulfite reductase 4Fe-4S domain family. Monomer. It depends on siroheme as a cofactor. [4Fe-4S] cluster is required as a cofactor.

It catalyses the reaction 6 oxidized [2Fe-2S]-[ferredoxin] + NH4(+) + 2 H2O = nitrite + 6 reduced [2Fe-2S]-[ferredoxin] + 8 H(+). The protein operates within nitrogen metabolism; nitrate reduction (assimilation). Its activity is regulated as follows. Inhibited by cyanide and azide. Catalyzes the reduction of nitrite to ammonium in the nitrate assimilation pathway, using ferredoxin as the electron donor. Can use reduced methyl viologen but neither NADPH nor NADH as electron donors. The chain is Assimilatory ferredoxin-dependent nitrite reductase from Haloferax mediterranei (strain ATCC 33500 / DSM 1411 / JCM 8866 / NBRC 14739 / NCIMB 2177 / R-4) (Halobacterium mediterranei).